Consider the following 961-residue polypeptide: Transcription factor MYB3R-4 (961 aa).

The interval 1–33 is disordered; the sequence is MEAESSTPQERIPKLRHGRTSGPARRSTRGQWT. 3 consecutive HTH myb-type domains span residues 24–75, 76–131, and 132–182; these read ARRS…QKVL, NPEL…NPAI, and NKEA…KKKL. 3 DNA-binding regions (H-T-H motif) span residues 52–75, 104–127, and 155–178; these read WKKIAEYFKDRTDVQCLHRWQKVL, WSTIARFLPGRIGKQCRERWHNHL, and WAELTKFLPGRSDNGIKNHWHSSV. Disordered stretches follow at residues 390–457 and 534–555; these read GHSV…LIIS and RPHSLPKHEPNMTNEQHHEDMG. 2 stretches are compositionally biased toward polar residues: residues 391–405 and 416–430; these read HSVSRSLTQEPNEFN and SSASDRQISEATKSP. Over residues 431 to 444 the composition is skewed to low complexity; sequence TQSSSSRFTATAAS. Positions 534–554 are enriched in basic and acidic residues; sequence RPHSLPKHEPNMTNEQHHEDM. Residues 612 to 619 carry the Nuclear localization signal motif; it reads GKKTLVGA. Residues 756–781 form a disordered region; it reads NTGKPVLSTPGQSVTKAEKAQVSTPR. Over residues 764–781 the composition is skewed to polar residues; that stretch reads TPGQSVTKAEKAQVSTPR.

Component of a DREAM-like complex which modulates a variety of developmentally regulated genes and of the mitotic genes in proliferating and differentiated cells. Associates with CDKA-1, RBR1 and E2FB, but not with E2FC, in proliferating cells, at early stages of leaves development. Expressed in roots, cotyledons and leaves, especially in vascular tissues, and in flowers.

Its subcellular location is the nucleus. Functionally, transcription factor that binds 5'-AACGG-3' motifs in gene promoters. Involved in the regulation of cytokinesis, probably via the activation of several G2/M phase-specific genes transcription (e.g. KNOLLE). Required for the maintenance of diploidy. Its function is as follows. Involved in transcription regulation during induced endoreduplication at the powdery mildew (e.g. G.orontii) infection site, thus promoting G.orontii growth and reproduction. This chain is Transcription factor MYB3R-4, found in Arabidopsis thaliana (Mouse-ear cress).